Reading from the N-terminus, the 500-residue chain is Probable malate:quinone oxidoreductase (500 aa).

It belongs to the MQO family. Requires FAD as cofactor.

It carries out the reaction (S)-malate + a quinone = a quinol + oxaloacetate. It participates in carbohydrate metabolism; tricarboxylic acid cycle; oxaloacetate from (S)-malate (quinone route): step 1/1. The chain is Probable malate:quinone oxidoreductase from Gluconobacter oxydans (strain 621H) (Gluconobacter suboxydans).